The chain runs to 230 residues: Phosphoribosylformylglycinamidine synthase subunit PurQ (230 aa).

Residues 2-226 (RVAVIVFPGS…LKTWREQNSV (225 aa)) enclose the Glutamine amidotransferase type-1 domain. Cys86 functions as the Nucleophile in the catalytic mechanism. Active-site residues include His195 and Glu197.

In terms of assembly, part of the FGAM synthase complex composed of 1 PurL, 1 PurQ and 2 PurS subunits.

Its subcellular location is the cytoplasm. The enzyme catalyses N(2)-formyl-N(1)-(5-phospho-beta-D-ribosyl)glycinamide + L-glutamine + ATP + H2O = 2-formamido-N(1)-(5-O-phospho-beta-D-ribosyl)acetamidine + L-glutamate + ADP + phosphate + H(+). It carries out the reaction L-glutamine + H2O = L-glutamate + NH4(+). Its pathway is purine metabolism; IMP biosynthesis via de novo pathway; 5-amino-1-(5-phospho-D-ribosyl)imidazole from N(2)-formyl-N(1)-(5-phospho-D-ribosyl)glycinamide: step 1/2. Functionally, part of the phosphoribosylformylglycinamidine synthase complex involved in the purines biosynthetic pathway. Catalyzes the ATP-dependent conversion of formylglycinamide ribonucleotide (FGAR) and glutamine to yield formylglycinamidine ribonucleotide (FGAM) and glutamate. The FGAM synthase complex is composed of three subunits. PurQ produces an ammonia molecule by converting glutamine to glutamate. PurL transfers the ammonia molecule to FGAR to form FGAM in an ATP-dependent manner. PurS interacts with PurQ and PurL and is thought to assist in the transfer of the ammonia molecule from PurQ to PurL. This is Phosphoribosylformylglycinamidine synthase subunit PurQ from Brevibacillus brevis (strain 47 / JCM 6285 / NBRC 100599).